A 211-amino-acid polypeptide reads, in one-letter code: Interleukin-6 (211 aa).

The signal sequence occupies residues 1–25 (MNSLSTSTFSPVAFSLGLLLVMATA). Cysteine 71 and cysteine 77 are joined by a disulfide. Position 80 is a phosphoserine (serine 80). The cysteines at positions 100 and 110 are disulfide-linked.

This sequence belongs to the IL-6 superfamily. In terms of assembly, component of a hexamer of two molecules each of IL6, IL6R and IL6ST; first binds to IL6R to associate with the signaling subunit IL6ST. Interacts with IL6R (via the N-terminal ectodomain); this interaction may be affected by IL6R-binding with SORL1, hence decreasing IL6 cis signaling. Interacts with SORL1 (via the N-terminal ectodomain); this interaction leads to IL6 internalization and lysosomal degradation. May form a trimeric complex with the soluble SORL1 ectodomain and soluble IL6R receptor; this interaction might stabilize circulating IL6, hence promoting IL6 trans signaling.

The protein localises to the secreted. Functionally, cytokine with a wide variety of biological functions in immunity, tissue regeneration, and metabolism. Binds to IL6R, then the complex associates to the signaling subunit IL6ST/gp130 to trigger the intracellular IL6-signaling pathway. The interaction with the membrane-bound IL6R and IL6ST stimulates 'classic signaling', whereas the binding of IL6 and soluble IL6R to IL6ST stimulates 'trans-signaling'. Alternatively, 'cluster signaling' occurs when membrane-bound IL6:IL6R complexes on transmitter cells activate IL6ST receptors on neighboring receiver cells. Its function is as follows. IL6 is a potent inducer of the acute phase response. Rapid production of IL6 contributes to host defense during infection and tissue injury, but excessive IL6 synthesis is involved in disease pathology. In the innate immune response, is synthesized by myeloid cells, such as macrophages and dendritic cells, upon recognition of pathogens through toll-like receptors (TLRs) at the site of infection or tissue injury. In the adaptive immune response, is required for the differentiation of B cells into immunoglobulin-secreting cells. Plays a major role in the differentiation of CD4(+) T cell subsets. Essential factor for the development of T follicular helper (Tfh) cells that are required for the induction of germinal-center formation. Required to drive naive CD4(+) T cells to the Th17 lineage. Also required for proliferation of myeloma cells and the survival of plasmablast cells. In terms of biological role, acts as an essential factor in bone homeostasis and on vessels directly or indirectly by induction of VEGF, resulting in increased angiogenesis activity and vascular permeability. Induces, through 'trans-signaling' and synergistically with IL1B and TNF, the production of VEGF. Involved in metabolic controls, is discharged into the bloodstream after muscle contraction increasing lipolysis and improving insulin resistance. 'Trans-signaling' in central nervous system also regulates energy and glucose homeostasis. Mediates, through GLP-1, crosstalk between insulin-sensitive tissues, intestinal L cells and pancreatic islets to adapt to changes in insulin demand. Also acts as a myokine. Plays a protective role during liver injury, being required for maintenance of tissue regeneration. Also has a pivotal role in iron metabolism by regulating HAMP/hepcidin expression upon inflammation or bacterial infection. Through activation of IL6ST-YAP-NOTCH pathway, induces inflammation-induced epithelial regeneration. In Lama glama (Llama), this protein is Interleukin-6 (IL6).